The following is a 449-amino-acid chain: Protein adenylyltransferase FICD (449 aa).

Residues 15–35 (LLWGWGPILFGLLGSVFVLLL) form a helical membrane-spanning segment. 2 TPR repeats span residues 96–129 (AKAA…NPEF) and 130–163 (VEAL…SPCH). The short motif at 220 to 225 (TVAIEG) is the Inhibitory (S/T)XXXE(G/N) motif element. ATP-binding positions include Glu-224, 250–251 (EQ), 358–360 (GNG), and Arg-364. A Fido domain is found at 275–410 (ITVNDILEIH…VRPFIRFIAK (136 aa)).

The protein belongs to the fic family.

The protein localises to the membrane. The enzyme catalyses L-tyrosyl-[protein] + ATP = O-(5'-adenylyl)-L-tyrosyl-[protein] + diphosphate. The catalysed reaction is L-threonyl-[protein] + ATP = 3-O-(5'-adenylyl)-L-threonyl-[protein] + diphosphate. With respect to regulation, adenylyltransferase activity is inhibited by the inhibitory helix present at the N-terminus: Glu-224 binds ATP and competes with ATP-binding at Arg-364, thereby preventing adenylyltransferase activity. Activation dissociates ATP-binding from Glu-224, allowing ordered binding of the entire ATP moiety with the alpha-phosphate in an orientation that is productive for accepting an incoming target hydroxyl side chain. In terms of biological role, adenylyltransferase that mediates the addition of adenosine 5'-monophosphate (AMP) to specific residues of target proteins. The sequence is that of Protein adenylyltransferase FICD (ficd) from Danio rerio (Zebrafish).